A 322-amino-acid chain; its full sequence is Cysteine protease yopT1 (322 aa).

The disordered stretch occupies residues 42 to 69 (LSHSNRQKKLSATIKHNQSSRSMLDRKL). Catalysis depends on residues Cys-139, His-258, and Asp-274.

This sequence belongs to the peptidase C58 family. As to quaternary structure, interacts with human ARHA.

The protein resides in the secreted. Cysteine protease, which is translocated into infected cells and plays a central role in pathogenesis by cleaving the C-terminus end of the human small GTPase RhoA/ARHA, a regulator of cytoskeleton. Once cleaved, ARHA loses its lipid modification, and is released from the cell membrane, leading to the subsequent disruption of actin cytoskeleton of the host cell. This is Cysteine protease yopT1 (yopT1) from Yersinia enterocolitica serotype O:8 / biotype 1B (strain NCTC 13174 / 8081).